We begin with the raw amino-acid sequence, 424 residues long: MLDIRLIREQPDMVKAALGRAGVDPAQVDAVLAYDEQRRALLREVEKLKALRNAVSKEIGKMSDAGERDTKIAEMRAVGDRIAALDRELAAVEERQYAALMELRNLPHPAVPDGPDETYNVVIAQEGEPRAFDFAPKPHWELGEALDIIDFERGVKLSGSRFYVLKGLGARLQRALIQWMLDLHIQQGYHEVYTPFVVKEQCMWGARQLPKFRDNLYRDVEDDLWLVPTAEVPVTNLHRDEILEADQLPLRYCAYTPCFRREKMSAGRDVRGIKRGHQFDKVEMYMFVHPDTSYDELEKLRADAEATCRLLGLTFRTKELCTGDLGFAATRTYDIEVWAPGQGEWLEVSSCSNVEAFQARAANIRYRSAPGARPEYVHTLNGSGLGLPRTLIAIMENYQQADGSIIIPDVLRPYMGGAEVIRRS.

229-231 is an L-serine binding site; it reads TAE. Residue 260 to 262 participates in ATP binding; sequence RRE. L-serine is bound at residue Glu283. ATP is bound at residue 347–350; the sequence is EVSS. Ser383 provides a ligand contact to L-serine.

The protein belongs to the class-II aminoacyl-tRNA synthetase family. Type-1 seryl-tRNA synthetase subfamily. In terms of assembly, homodimer. The tRNA molecule binds across the dimer.

It localises to the cytoplasm. It carries out the reaction tRNA(Ser) + L-serine + ATP = L-seryl-tRNA(Ser) + AMP + diphosphate + H(+). The enzyme catalyses tRNA(Sec) + L-serine + ATP = L-seryl-tRNA(Sec) + AMP + diphosphate + H(+). Its pathway is aminoacyl-tRNA biosynthesis; selenocysteinyl-tRNA(Sec) biosynthesis; L-seryl-tRNA(Sec) from L-serine and tRNA(Sec): step 1/1. Its function is as follows. Catalyzes the attachment of serine to tRNA(Ser). Is also able to aminoacylate tRNA(Sec) with serine, to form the misacylated tRNA L-seryl-tRNA(Sec), which will be further converted into selenocysteinyl-tRNA(Sec). The sequence is that of Serine--tRNA ligase from Roseiflexus castenholzii (strain DSM 13941 / HLO8).